A 90-amino-acid chain; its full sequence is UPF0298 protein RBAM_014860 (90 aa).

It belongs to the UPF0298 family.

The protein resides in the cytoplasm. The protein is UPF0298 protein RBAM_014860 of Bacillus velezensis (strain DSM 23117 / BGSC 10A6 / LMG 26770 / FZB42) (Bacillus amyloliquefaciens subsp. plantarum).